A 298-amino-acid chain; its full sequence is Protoheme IX farnesyltransferase (298 aa).

8 helical membrane-spanning segments follow: residues 16–36 (VVAL…PGMP), 45–65 (ALGF…NQLL), 97–117 (VLIV…TAVL), 141–161 (IVIG…AVTG), 172–192 (SLLV…LAIF), 223–243 (VLLA…VFYL), 244–264 (GGAV…LDPP), and 277–297 (VVYL…LPWV).

It belongs to the UbiA prenyltransferase family. Protoheme IX farnesyltransferase subfamily.

It is found in the cell inner membrane. The enzyme catalyses heme b + (2E,6E)-farnesyl diphosphate + H2O = Fe(II)-heme o + diphosphate. The protein operates within porphyrin-containing compound metabolism; heme O biosynthesis; heme O from protoheme: step 1/1. Its function is as follows. Converts heme B (protoheme IX) to heme O by substitution of the vinyl group on carbon 2 of heme B porphyrin ring with a hydroxyethyl farnesyl side group. This is Protoheme IX farnesyltransferase from Xanthomonas campestris pv. campestris (strain 8004).